Reading from the N-terminus, the 159-residue chain is Cytochrome c-type biogenesis protein CcmE (159 aa).

Over 1 to 23 the chain is Cytoplasmic; the sequence is MNNSSLENSASLKVILKQRKKKR. Residues 24–44 form a helical; Signal-anchor for type II membrane protein membrane-spanning segment; sequence LLIILLCCLVMAIAASLVVYA. Over 45–159 the chain is Periplasmic; that stretch reads MRHAVSFFRM…RLKKHYSVEK (115 aa). Residues histidine 138 and tyrosine 142 each contribute to the heme site.

It belongs to the CcmE/CycJ family.

It is found in the cell inner membrane. Functionally, heme chaperone required for the biogenesis of c-type cytochromes. Transiently binds heme delivered by CcmC and transfers the heme to apo-cytochromes in a process facilitated by CcmF and CcmH. The chain is Cytochrome c-type biogenesis protein CcmE from Bartonella tribocorum (strain CIP 105476 / IBS 506).